The sequence spans 190 residues: Lipid A acyltransferase PagP (190 aa).

A signal peptide spans 1–18 (MKRLISCLTIICALNASA). Residues His60, Asp103, and Ser104 contribute to the active site.

It belongs to the lipid A palmitoyltransferase family. In terms of assembly, homodimer.

The protein localises to the cell outer membrane. The enzyme catalyses a lipid A + a 1,2-diacyl-sn-glycero-3-phosphocholine = a hepta-acyl lipid A + a 2-acyl-sn-glycero-3-phosphocholine. It carries out the reaction a lipid IVA + a 1,2-diacyl-sn-glycero-3-phosphocholine = a lipid IVB + a 2-acyl-sn-glycero-3-phosphocholine. The catalysed reaction is a lipid IIA + a 1,2-diacyl-sn-glycero-3-phosphocholine = a lipid IIB + a 2-acyl-sn-glycero-3-phosphocholine. Transfers a fatty acid residue from the sn-1 position of a phospholipid to the N-linked hydroxyfatty acid chain on the proximal unit of lipid A or its precursors. The protein is Lipid A acyltransferase PagP of Legionella pneumophila (strain Corby).